Reading from the N-terminus, the 314-residue chain is Malate dehydrogenase (314 aa).

NAD(+) is bound by residues 11–16 and Asp35; that span reads GSGNIG. Residues Arg84 and Arg90 each coordinate substrate. NAD(+) is bound by residues Asn97 and 120–122; that span reads ITN. Substrate-binding residues include Asn122 and Arg153. His177 functions as the Proton acceptor in the catalytic mechanism.

It belongs to the LDH/MDH superfamily. MDH type 3 family.

It carries out the reaction (S)-malate + NAD(+) = oxaloacetate + NADH + H(+). Its function is as follows. Catalyzes the reversible oxidation of malate to oxaloacetate. The sequence is that of Malate dehydrogenase from Rickettsia rickettsii (strain Iowa).